The chain runs to 193 residues: Pyridoxal 5'-phosphate synthase subunit PdxT (193 aa).

Position 52 to 54 (52 to 54) interacts with L-glutamine; sequence GES. The active-site Nucleophile is cysteine 84. Residues arginine 111 and 139-140 each bind L-glutamine; that span reads IR. Residues histidine 176 and glutamate 178 each act as charge relay system in the active site.

Belongs to the glutaminase PdxT/SNO family. In terms of assembly, in the presence of PdxS, forms a dodecamer of heterodimers. Only shows activity in the heterodimer.

The enzyme catalyses aldehydo-D-ribose 5-phosphate + D-glyceraldehyde 3-phosphate + L-glutamine = pyridoxal 5'-phosphate + L-glutamate + phosphate + 3 H2O + H(+). The catalysed reaction is L-glutamine + H2O = L-glutamate + NH4(+). It functions in the pathway cofactor biosynthesis; pyridoxal 5'-phosphate biosynthesis. Functionally, catalyzes the hydrolysis of glutamine to glutamate and ammonia as part of the biosynthesis of pyridoxal 5'-phosphate. The resulting ammonia molecule is channeled to the active site of PdxS. The protein is Pyridoxal 5'-phosphate synthase subunit PdxT of Pasteurella multocida (strain Pm70).